Reading from the N-terminus, the 395-residue chain is 8-amino-7-oxononanoate synthase (395 aa).

Residue Arg-24 coordinates substrate. 111-112 (GF) serves as a coordination point for pyridoxal 5'-phosphate. His-136 is a substrate binding site. Pyridoxal 5'-phosphate contacts are provided by residues Ser-184, 209-212 (DDAH), and 240-243 (TLSK). Position 243 is an N6-(pyridoxal phosphate)lysine (Lys-243). Thr-357 contributes to the substrate binding site.

This sequence belongs to the class-II pyridoxal-phosphate-dependent aminotransferase family. BioF subfamily. As to quaternary structure, homodimer. The cofactor is pyridoxal 5'-phosphate.

It catalyses the reaction 6-carboxyhexanoyl-[ACP] + L-alanine + H(+) = (8S)-8-amino-7-oxononanoate + holo-[ACP] + CO2. It participates in cofactor biosynthesis; biotin biosynthesis. Its function is as follows. Catalyzes the decarboxylative condensation of pimeloyl-[acyl-carrier protein] and L-alanine to produce 8-amino-7-oxononanoate (AON), [acyl-carrier protein], and carbon dioxide. This is 8-amino-7-oxononanoate synthase from Alkaliphilus metalliredigens (strain QYMF).